The primary structure comprises 215 residues: Large ribosomal subunit protein bL25 (215 aa).

The tract at residues 160-215 (GDLPLPEGSELVTEPEETVMSVVAPETEEEPDTEEDEEGEEDVEEESEEEEEESEE) is disordered. Residues 185–215 (ETEEEPDTEEDEEGEEDVEEESEEEEEESEE) show a composition bias toward acidic residues.

It belongs to the bacterial ribosomal protein bL25 family. CTC subfamily. In terms of assembly, part of the 50S ribosomal subunit; part of the 5S rRNA/L5/L18/L25 subcomplex. Contacts the 5S rRNA. Binds to the 5S rRNA independently of L5 and L18.

Functionally, this is one of the proteins that binds to the 5S RNA in the ribosome where it forms part of the central protuberance. This chain is Large ribosomal subunit protein bL25, found in Natranaerobius thermophilus (strain ATCC BAA-1301 / DSM 18059 / JW/NM-WN-LF).